A 142-amino-acid chain; its full sequence is Ribosome maturation factor RimP (142 aa).

The protein belongs to the RimP family.

The protein localises to the cytoplasm. In terms of biological role, required for maturation of 30S ribosomal subunits. The protein is Ribosome maturation factor RimP of Nitrosospira multiformis (strain ATCC 25196 / NCIMB 11849 / C 71).